A 192-amino-acid chain; its full sequence is Secreted phosphoprotein 24 (192 aa).

The N-terminal stretch at 1 to 18 (MKWCVLMLALLQSLCCSG) is a signal peptide. 2 cysteine pairs are disulfide-bonded: cysteine 82–cysteine 93 and cysteine 106–cysteine 124. The segment at 124-192 (CGQDSSSSES…RGDSIGNHLE (69 aa)) is disordered. Low complexity predominate over residues 128–137 (SSSSESSSEE).

Belongs to the SPP2 family. In terms of processing, multiply phosphorylated at serine residues.

It is found in the secreted. Functionally, could coordinate an aspect of bone turnover. The protein is Secreted phosphoprotein 24 (spp2) of Oncorhynchus mykiss (Rainbow trout).